The primary structure comprises 436 residues: MTFGRSGAASVVLNVGGARYSLSRELLKDFPLRRVSRLHGCRSERDVLEVCDDYDRERNEYFFDRHSEAFGFILLYVRGHGKLRFAPRMCELSFYNEMIYWGLEGAHLEYCCQRRLDDRMSDTYTFYSADEPGVLGRDEARPGGAEAAPSRRWLERMRRTFEEPTSSLAAQILASVSVVFVIVSMVVLCASTLPDWRNAAADNRSLDDRSRYSAGPGREPSGIIEAICIGWFTAECIVRFIVSKNKCEFVKRPLNIIDLLAITPYYISVLMTVFTGENSQLQRAGVTLRVLRMMRIFWVIKLARHFIGLQTLGLTLKRCYREMVMLLVFICVAMAIFSALSQLLEHGLDLETSNKDFTSIPAACWWVIISMTTVGYGDMYPITVPGRILGGVCVVSGIVLLALPITFIYHSFVQCYHELKFRSARYSRSLSTEFLN.

The Cytoplasmic segment spans residues 1-168 (MTFGRSGAAS…RTFEEPTSSL (168 aa)). A helical membrane pass occupies residues 169 to 190 (AAQILASVSVVFVIVSMVVLCA). The Extracellular segment spans residues 191-220 (STLPDWRNAAADNRSLDDRSRYSAGPGREP). The helical transmembrane segment at 221 to 242 (SGIIEAICIGWFTAECIVRFIV) threads the bilayer. The Cytoplasmic portion of the chain corresponds to 243-253 (SKNKCEFVKRP). The chain crosses the membrane as a helical span at residues 254–274 (LNIIDLLAITPYYISVLMTVF). Over 275–284 (TGENSQLQRA) the chain is Extracellular. Residues 285–305 (GVTLRVLRMMRIFWVIKLARH) traverse the membrane as a helical; Voltage-sensor segment. Residues 306-320 (FIGLQTLGLTLKRCY) lie on the Cytoplasmic side of the membrane. The chain crosses the membrane as a helical span at residues 321–342 (REMVMLLVFICVAMAIFSALSQ). Topologically, residues 343–360 (LLEHGLDLETSNKDFTSI) are extracellular. Positions 361 to 372 (PAACWWVIISMT) form an intramembrane region, helical. Residues 373–378 (TVGYGD) carry the Selectivity filter motif. Residues 373–380 (TVGYGDMY) lie within the membrane without spanning it. Topologically, residues 381 to 387 (PITVPGR) are extracellular. A helical transmembrane segment spans residues 388–416 (ILGGVCVVSGIVLLALPITFIYHSFVQCY). Residues 417–436 (HELKFRSARYSRSLSTEFLN) are Cytoplasmic-facing.

It belongs to the potassium channel family. G (TC 1.A.1.2) subfamily. Kv6.3/KCNG3 sub-subfamily. Heterotetramer with KCNB1. Does not form homomultimers. In terms of tissue distribution, expressed in the brain, liver, testis, small intestine, colon, thymus and adrenal gland.

The protein resides in the cell membrane. It is found in the cytoplasm. Regulatory subunit of the voltage-gated potassium (Kv) channel which, when coassembled with KCNB1, modulates the kinetics parameters of the heterotetrameric channel namely the inactivation and deactivation rate. Potassium channel subunit that does not form functional channels by itself. Reduces the deactivation rate. Moderately accelerates activation. The polypeptide is Voltage-gated potassium channel regulatory subunit KCNG3 (Homo sapiens (Human)).